We begin with the raw amino-acid sequence, 512 residues long: Calcium-dependent protein kinase 18 (512 aa).

A disordered region spans residues 1 to 25 (MGLCSSSSARRDAGTPGGGNGAGNK). G2 is lipidated: N-myristoyl glycine. Residues 52-312 (YALGKLLGHG…AAQALSHEWV (261 aa)) form the Protein kinase domain. Residues 58 to 66 (LGHGQFGYT) and K81 contribute to the ATP site. Catalysis depends on D178, which acts as the Proton acceptor. Residues 318-348 (ASDIPLDISVLHNMRQFVKYSRFKQFALRAL) are autoinhibitory domain. EF-hand domains follow at residues 355 to 390 (EELS…DVPW), 392 to 427 (LKGP…VHQL), 434 to 469 (KWKS…KGSI), and 472 to 499 (LLEE…ASMS). Ca(2+)-binding residues include D368, D370, N372, T374, E379, D405, N407, D409, E416, D447, D449, D451, Y453, E458, D477, D479, D481, K483, and E488.

This sequence belongs to the protein kinase superfamily. Ser/Thr protein kinase family. CDPK subfamily. As to quaternary structure, interacts with MPK5. Autophosphorylated. Phosphorylated by MPK5.

The protein localises to the cell membrane. The enzyme catalyses L-seryl-[protein] + ATP = O-phospho-L-seryl-[protein] + ADP + H(+). It carries out the reaction L-threonyl-[protein] + ATP = O-phospho-L-threonyl-[protein] + ADP + H(+). Activated by calcium. Autophosphorylation may play an important role in the regulation of the kinase activity. Functionally, may play a role in signal transduction pathways that involve calcium as a second messenger. Functions upstream of MPK5 in a signaling pathway that represses defense gene expression and negatively regulates resistance to rice blast fungus. Phosphorylates MPK5 at Thr-14 and Thr-32 and activates MPK5 independently of MAP kinase kinase (MKK) phosphorylation. May be involved in arbuscular mycorrhizal presymbiotic phase signaling. Phosphorylates the elicitor-responsive protein ERG1 in vitro. Phosphorylation is calcium-dependent. The protein is Calcium-dependent protein kinase 18 of Oryza sativa subsp. japonica (Rice).